A 199-amino-acid chain; its full sequence is Transgelin-2 (199 aa).

The residue at position 2 (Ala-2) is an N-acetylalanine. Ser-11 is modified (phosphoserine). 2 positions are modified to N6-acetyllysine: Lys-17 and Lys-20. A Calponin-homology (CH) domain is found at Ala-24–Ala-136. Residue Ser-163 is modified to Phosphoserine. Lys-171 participates in a covalent cross-link: Glycyl lysine isopeptide (Lys-Gly) (interchain with G-Cter in SUMO2). The Calponin-like repeat unit spans residues Ile-174 to Leu-199. Thr-180 carries the phosphothreonine modification. An omega-N-methylarginine mark is found at Arg-182 and Arg-196.

It belongs to the calponin family.

This chain is Transgelin-2 (TAGLN2), found in Bos taurus (Bovine).